Here is a 315-residue protein sequence, read N- to C-terminus: Acetaldehyde dehydrogenase 2 (315 aa).

An NAD(+)-binding site is contributed by 15 to 18 (SGNI). The active-site Acyl-thioester intermediate is cysteine 135. Residues 166–174 (SAGPGTRAN) and asparagine 293 each bind NAD(+).

The protein belongs to the acetaldehyde dehydrogenase family.

The catalysed reaction is acetaldehyde + NAD(+) + CoA = acetyl-CoA + NADH + H(+). The chain is Acetaldehyde dehydrogenase 2 from Paraburkholderia phymatum (strain DSM 17167 / CIP 108236 / LMG 21445 / STM815) (Burkholderia phymatum).